Reading from the N-terminus, the 461-residue chain is tRNA-splicing endonuclease subunit Sen2 (461 aa).

Disordered stretches follow at residues 140-176 (GAEQ…TSSP) and 190-210 (GDPA…DVKE). Residues 144 to 176 (TGDSCDTVCPNTENTELSGQSSTDTGNIATSSP) are compositionally biased toward polar residues. Residues 201–210 (KEQEPADVKE) show a composition bias toward basic and acidic residues. Residues Tyr-365, His-373, and Lys-412 contribute to the active site.

This sequence belongs to the tRNA-intron endonuclease family. As to quaternary structure, tRNA splicing endonuclease is a heterotetramer composed of SEN2, SEN15, SEN34/LENG5 and SEN54.

It localises to the nucleus. It carries out the reaction pretRNA = a 3'-half-tRNA molecule with a 5'-OH end + a 5'-half-tRNA molecule with a 2',3'-cyclic phosphate end + an intron with a 2',3'-cyclic phosphate and a 5'-hydroxyl terminus.. In terms of biological role, constitutes one of the two catalytic subunit of the tRNA-splicing endonuclease complex, a complex responsible for identification and cleavage of the splice sites in pre-tRNA. It cleaves pre-tRNA at the 5'- and 3'-splice sites to release the intron. The products are an intron and two tRNA half-molecules bearing 2',3'-cyclic phosphate and 5'-OH termini. There are no conserved sequences at the splice sites, but the intron is invariably located at the same site in the gene, placing the splice sites an invariant distance from the constant structural features of the tRNA body. Probably carries the active site for 5'-splice site cleavage. The tRNA splicing endonuclease is also involved in mRNA processing via its association with pre-mRNA 3'-end processing factors, establishing a link between pre-tRNA splicing and pre-mRNA 3'-end formation, suggesting that the endonuclease subunits function in multiple RNA-processing events. This is tRNA-splicing endonuclease subunit Sen2 (TSEN2) from Gallus gallus (Chicken).